Reading from the N-terminus, the 1111-residue chain is Atrial natriuretic peptide-converting enzyme (1111 aa).

Residues Met-1–Arg-112 lie on the Cytoplasmic side of the membrane. Residues Ala-93 to Ser-96 carry the DDNN motif motif. The helical; Signal-anchor for type II membrane protein transmembrane segment at Phe-113 to Leu-133 threads the bilayer. Residues Ser-134–Gly-1111 are Extracellular-facing. N-linked (GlcNAc...) asparagine glycosylation is present at Asn-147. In terms of domain architecture, FZ 1 spans Gly-199–Leu-325. Disulfide bonds link Cys-204/Cys-264, Cys-212/Cys-257, Cys-248/Cys-288, Cys-277/Cys-322, Cys-281/Cys-305, Cys-335/Cys-348, Cys-343/Cys-361, Cys-355/Cys-370, Cys-372/Cys-384, Cys-379/Cys-397, Cys-391/Cys-406, Cys-408/Cys-421, Cys-416/Cys-434, Cys-428/Cys-443, Cys-445/Cys-458, Cys-453/Cys-471, Cys-465/Cys-480, Cys-521/Cys-584, Cys-529/Cys-577, Cys-568/Cys-606, Cys-595/Cys-636, Cys-599/Cys-623, Cys-646/Cys-658, Cys-653/Cys-671, Cys-665/Cys-680, Cys-682/Cys-696, Cys-690/Cys-709, Cys-703/Cys-718, Cys-721/Cys-733, Cys-728/Cys-746, and Cys-740/Cys-755. Residue Asn-296 is glycosylated (N-linked (GlcNAc...) asparagine). LDL-receptor class A domains follow at residues Leu-334–Asn-371, Asn-371–Asp-407, Asp-407–Ser-444, and Ser-444–Ser-481. A glycan (N-linked (GlcNAc...) asparagine) is linked at Asn-409. The FZ 2 domain occupies Ser-516 to Pro-639. The N-linked (GlcNAc...) asparagine glycan is linked to Asn-535. LDL-receptor class A domains lie at Glu-645–Gly-681, Gly-681–Ser-719, and Phe-720–Val-756. The SRCR domain maps to Val-756–Thr-851. N-linked (GlcNAc...) asparagine glycosylation occurs at Asn-763. Intrachain disulfides connect Cys-855–Cys-977, Cys-893–Cys-909, Cys-991–Cys-1056, and Cys-1020–Cys-1035. The region spanning Ile-867–Tyr-1100 is the Peptidase S1 domain. Catalysis depends on charge relay system residues His-908 and Asp-957. Residue Ser-1050 is the Charge relay system of the active site.

The protein belongs to the peptidase S1 family. Post-translationally, N-glycosylated; required for processing and activation. In terms of processing, activated through proteolytic processing by a trypsin-like protease; cleaved into a N-terminal propeptide and an activated corin protease fragment. Atrial natriuretic peptide-converting enzyme, 180 kDa soluble fragment is produced by cleavage by ADAM10. Cleavage by ADAM10 to produce soluble 180 kDa soluble fragment takes place after the transmembrane region and before FZ 1. A disulfide bond links the activated corin protease fragment and the N-terminal propeptide. The disulfide bond also links the activated corin protease fragment with Atrial natriuretic peptide-converting enzyme, 180 kDa soluble fragment. Specifically expressed in heart. Also detected in kidney, aorta, brain and testis. In kidney, present in epithelial cells, with segmental expression in the proximal tubule, thick ascending limb, connecting tubule, and throughout the collecting duct (at protein level).

The protein resides in the cell membrane. It is found in the cytoplasmic vesicle. The protein localises to the secreted. Its function is as follows. Serine-type endopeptidase involved in atrial natriuretic peptide (NPPA) processing. Converts through proteolytic cleavage the non-functional propeptide NPPA into the active hormone, thereby regulating blood pressure in heart and promoting natriuresis, diuresis and vasodilation. Proteolytic cleavage of pro-NPPA also plays a role in female pregnancy by promoting trophoblast invasion and spiral artery remodeling in uterus. Also acts as a regulator of sodium reabsorption in kidney. May also process pro-NPPB the B-type natriuretic peptide. The chain is Atrial natriuretic peptide-converting enzyme (Corin) from Rattus norvegicus (Rat).